We begin with the raw amino-acid sequence, 150 residues long: Non-specific lipid transfer protein GPI-anchored 7 (150 aa).

Positions Met-1–Ala-25 are cleaved as a signal peptide. 4 disulfide bridges follow: Cys-29/Cys-66, Cys-36/Cys-50, Cys-51/Cys-92, and Cys-64/Cys-101. 3 N-linked (GlcNAc...) asparagine glycosylation sites follow: Asn-41, Asn-79, and Asn-93. The interval Ala-103–Asp-125 is disordered. The GPI-anchor amidated aspartate moiety is linked to residue Asp-125. Positions Ala-126–Phe-150 are cleaved as a propeptide — removed in mature form.

This sequence belongs to the plant LTP family. Up-regulated in the epidermis of stems.

The protein resides in the cell membrane. Functionally, probable lipid transfer protein. The chain is Non-specific lipid transfer protein GPI-anchored 7 from Arabidopsis thaliana (Mouse-ear cress).